Here is a 471-residue protein sequence, read N- to C-terminus: ATP-dependent RNA helicase DBP5 (471 aa).

A compositionally biased stretch (basic and acidic residues) spans 1–15; sequence MSATEPTKEPAKEEV. A disordered region spans residues 1 to 39; the sequence is MSATEPTKEPAKEEVAEQSTVAQAQVDGSGEPANGSPLT. The short motif at 64–92 is the Q motif element; that stretch reads QSFEELQLSEELLKGVRNMNFRKPSKIQE. Residues 97 to 265 enclose the Helicase ATP-binding domain; the sequence is LLLMNPPTNM…NKFAPNSNVL (169 aa). 110-117 contributes to the ATP binding site; that stretch reads SQSGTGKT. The DEAD box motif lies at 212-215; it reads DEAD. The region spanning 276 to 453 is the Helicase C-terminal domain; the sequence is GIKQLYIDID…NVEEMIQKII (178 aa).

It belongs to the DEAD box helicase family. DDX19/DBP5 subfamily. In terms of assembly, associates with the nuclear pore complex.

It localises to the cytoplasm. Its subcellular location is the nucleus. The protein localises to the nuclear pore complex. The protein resides in the nucleus membrane. It catalyses the reaction ATP + H2O = ADP + phosphate + H(+). ATP-dependent RNA helicase associated with the nuclear pore complex and essential for mRNA export from the nucleus. May participate in a terminal step of mRNA export through the removal of proteins that accompany mRNA through the nucleopore complex. May also be involved in early transcription. This chain is ATP-dependent RNA helicase DBP5 (DBP5), found in Phaeosphaeria nodorum (strain SN15 / ATCC MYA-4574 / FGSC 10173) (Glume blotch fungus).